A 361-amino-acid chain; its full sequence is 3-galactosyl-N-acetylglucosaminide 4-alpha-L-fucosyltransferase FUT3 (361 aa).

The Cytoplasmic segment spans residues 1-15 (MDPLGAAKPQWPWRR). Residues 16-34 (CLAALLFQLLVAVCFFSYL) traverse the membrane as a helical; Signal-anchor for type II membrane protein segment. Residues 35–361 (RVSRDDATGS…TVRSIAAWFT (327 aa)) lie on the Lumenal side of the membrane. The tract at residues 39–58 (DDATGSPRAPSGSSRQDTTP) is disordered. N-linked (GlcNAc...) asparagine glycans are attached at residues Asn154 and Asn185.

It belongs to the glycosyltransferase 10 family. Glycosylated. Highly expressed in stomach, colon, small intestine, lung and kidney and to a lesser extent in salivary gland, bladder, uterus and liver.

The protein localises to the golgi apparatus. Its subcellular location is the golgi stack membrane. It carries out the reaction a beta-D-galactosyl-(1-&gt;3)-N-acetyl-beta-D-glucosaminyl derivative + GDP-beta-L-fucose = a beta-D-galactosyl-(1-&gt;3)-[alpha-L-fucosyl-(1-&gt;4)]-N-acetyl-beta-D-glucosaminyl derivative + GDP + H(+). The enzyme catalyses an N-acetyl-alpha-neuraminyl-(2-&gt;3)-beta-D-galactosyl-(1-&gt;4)-N-acetyl-beta-D-glucosaminyl derivative + GDP-beta-L-fucose = an alpha-Neu5Ac-(2-&gt;3)-beta-D-Gal-(1-&gt;4)-[alpha-L-Fuc-(1-&gt;3)]-beta-D-GlcNAc derivative + GDP + H(+). It catalyses the reaction a beta-D-galactosyl-(1-&gt;4)-N-acetyl-beta-D-glucosaminyl derivative + GDP-beta-L-fucose = a beta-D-galactosyl-(1-&gt;4)-[alpha-L-fucosyl-(1-&gt;3)]-N-acetyl-beta-D-glucosaminyl derivative + GDP + H(+). The catalysed reaction is an alpha-Neu5Ac-(2-&gt;3)-beta-D-Gal-(1-&gt;4)-beta-D-GlcNAc-(1-&gt;3)-beta-D-Gal-(1-&gt;4)-[alpha-L-Fuc-(1-&gt;3)]-beta-D-GlcNAc derivative + GDP-beta-L-fucose = an alpha-Neu5Ac-(2-&gt;3)-beta-D-Gal-(1-&gt;4)-[alpha-L-Fuc-(1-&gt;3)]-beta-D-GlcNAc-(1-&gt;3)-beta-D-Gal-(1-&gt;4)-[alpha-L-Fuc-(1-&gt;3)]-beta-D-GlcNAc derivative + GDP + H(+). It carries out the reaction Lc4Cer + GDP-beta-L-fucose = a lactoside III(4)-a-Fuc-Lc4Cer + GDP + H(+). The enzyme catalyses a beta-D-Gal-(1-&gt;3)-beta-D-GlcNAc-(1-&gt;3)-beta-D-Gal-(1-&gt;4)-beta-D-Glc-(1&lt;-&gt;1')-Cer(d18:1(4E)) + GDP-beta-L-fucose = a III(4)-a-Fuc-Lc4Cer(d18:1(4E)) + GDP + H(+). It catalyses the reaction N-acetyl-alpha-neuraminosyl-(2-&gt;3)-beta-D-galactosyl-(1-&gt;3)-[N-acetyl-alpha-neuraminosyl-(2-&gt;6)]-N-acetyl-beta-D-glucosaminyl-(1-&gt;3)-beta-D-galactosyl-(1-&gt;4)-beta-D-glucosyl-(1&lt;-&gt;1')-N-acyl-sphing-4-enine + GDP-beta-L-fucose = N-acetyl-alpha-neuraminosyl-(2-&gt;3)-beta-D-galactosyl-(1-&gt;3)-alpha-L-fucosyl-(1-&gt;4)-[N-acetyl-alpha-neuraminosyl-(2-&gt;6)-N-acetyl-beta-D-glucosaminyl-(1-&gt;3)]-beta-D-galactosyl-(1-&gt;4)-beta-D-glucosyl-(1&lt;-&gt;1')-N-acyl-sphing-4-enine + GDP + H(+). The catalysed reaction is N-acetyl-alpha-neuraminosyl-(2-&gt;3)-beta-D-galactosyl-(1-&gt;3)-N-acetyl-beta-D-glucosaminyl-(1-&gt;3)-beta-D-galactosyl-(1-&gt;4)-beta-D-glucosyl-(1&lt;-&gt;1')-N-acyl-sphing-4-enine + GDP-beta-L-fucose = N-acetyl-alpha-neuraminosyl-(2-&gt;3)-beta-D-galactosyl-(1-&gt;3)-alpha-L-fucosyl-(1-&gt;4)-[N-acetyl-beta-D-glucosaminyl-(1-&gt;3)]-beta-D-galactosyl-(1-&gt;4)-beta-D-glucosyl-(1&lt;-&gt;1')-N-acyl-sphing-4-enine + GDP + H(+). It carries out the reaction beta-D-galactosyl-(1-&gt;3)-N-acetyl-D-glucosamine + GDP-beta-L-fucose = beta-D-galactosyl-(1-&gt;3)-[alpha-L-fucosyl-(1-&gt;4)]-N-acetyl-D-glucosamine + GDP + H(+). The enzyme catalyses alpha-L-Fuc-(1-&gt;2)-beta-D-Gal-(1-&gt;3)-D-GlcNAc + GDP-beta-L-fucose = alpha-L-Fuc-(1-&gt;2)-beta-D-Gal-(1-&gt;3)-[alpha-L-Fuc-(1-&gt;4)]-D-GlcNAc + GDP + H(+). It catalyses the reaction alpha-L-Fuc-(1-&gt;2)-beta-D-Gal-(1-&gt;4)-D-GlcNAc + GDP-beta-L-fucose = alpha-L-Fuc-(1-&gt;2)-beta-D-Gal-(1-&gt;4)-[alpha-L-Fuc-(1-&gt;3)]-D-GlcNAc + GDP + H(+). The catalysed reaction is beta-D-galactosyl-(1-&gt;4)-N-acetyl-D-glucosamine + GDP-beta-L-fucose = beta-D-galactosyl-(1-&gt;4)-[alpha-L-fucosyl-(1-&gt;3)]-N-acetyl-D-glucosamine + GDP + H(+). It carries out the reaction lactose + GDP-beta-L-fucose = beta-D-galactosyl-(1-&gt;4)-[alpha-L-fucosyl-(1-&gt;3)]-D-glucose + GDP + H(+). The enzyme catalyses an alpha-Neu5Ac-(2-&gt;3)-beta-D-Gal-(1-&gt;3)-D-GlcNAc derivative + GDP-beta-L-fucose = an alpha-Neu5Ac-(2-&gt;3)-beta-D-Gal-(1-&gt;3)-[alpha-L-Fuc-(1-&gt;4)]-beta-D-GlcNAc derivative + GDP + H(+). Its pathway is protein modification; protein glycosylation. Catalyzes the transfer of L-fucose, from a guanosine diphosphate-beta-L-fucose, to both the subterminal N-acetyl glucosamine (GlcNAc) of type 1 chain (beta-D-Gal-(1-&gt;3)-beta-D-GlcNAc) glycolipids and oligosaccharides via an alpha(1,4) linkage, and the subterminal glucose (Glc) or GlcNAc of type 2 chain (beta-D-Gal-(1-&gt;4)-beta-D-GlcNAc) oligosaccharides via an alpha(1,3) linkage, independently of the presence of terminal alpha-L-fucosyl-(1,2) moieties on the terminal galactose of these acceptors. Through its catalytic activity, participates in the synthesis of antigens of the Lewis blood group system, i.e. Lewis a (Le(a)), lewis b (Le(b)), Lewis x/SSEA-1 (Le(x)) and lewis y (Le(y)) antigens. Also catalyzes the transfer of L-fucose to subterminal GlcNAc of sialyl- and disialyl-lactotetraosylceramide to produce sialyl Lewis a (sLe(a)) and disialyl Lewis a via an alpha(1,4) linkage and therefore may regulate cell surface sLe(a) expression and consequently regulates adhesive properties to E-selectin, cell proliferation and migration. Catalyzes the transfer of an L-fucose to 3'-sialyl-N-acetyllactosamine by an alpha(1,3) linkage, which allows the formation of sialyl-Lewis x structure and therefore may regulate the sialyl-Lewis x surface antigen expression and consequently adhesive properties to E-selectin. Prefers type 1 chain over type 2 acceptors. Type 1 tetrasaccharide is a better acceptor than type 1 disaccharide suggesting that a beta anomeric configuration of GlcNAc in the substrate is preferred. Lewis-positive (Le(+)) individuals have an active enzyme while Lewis-negative (Le(-)) individuals have an inactive enzyme. This Homo sapiens (Human) protein is 3-galactosyl-N-acetylglucosaminide 4-alpha-L-fucosyltransferase FUT3.